The primary structure comprises 129 residues: Prefoldin subunit 6 (129 aa).

N-acetylalanine is present on A2. Residue K21 is modified to N6-acetyllysine. At K66 the chain carries N6-acetyllysine; alternate. K66 participates in a covalent cross-link: Glycyl lysine isopeptide (Lys-Gly) (interchain with G-Cter in SUMO1); alternate. K66 participates in a covalent cross-link: Glycyl lysine isopeptide (Lys-Gly) (interchain with G-Cter in SUMO2); alternate.

Belongs to the prefoldin subunit beta family. In terms of assembly, heterohexamer of two PFD-alpha type and four PFD-beta type subunits. Component of the PAQosome complex which is responsible for the biogenesis of several protein complexes and which consists of R2TP complex members RUVBL1, RUVBL2, RPAP3 and PIH1D1, URI complex members PFDN2, PFDN6, PDRG1, UXT and URI1 as well as ASDURF, POLR2E and DNAAF10/WDR92.

In terms of biological role, binds specifically to cytosolic chaperonin (c-CPN) and transfers target proteins to it. Binds to nascent polypeptide chain and promotes folding in an environment in which there are many competing pathways for nonnative proteins. In Bos taurus (Bovine), this protein is Prefoldin subunit 6 (PFDN6).